The primary structure comprises 235 residues: Small ribosomal subunit protein uS10m (235 aa).

The N-terminal 19 residues, 1 to 19, are a transit peptide targeting the mitochondrion; that stretch reads MLRTSVRSPLLYRCLSKRF.

This sequence belongs to the universal ribosomal protein uS10 family. In terms of assembly, part of the mitochondrial small ribosomal subunit.

Its subcellular location is the mitochondrion. Its function is as follows. Involved in mitochondrial genome encoded proteins translation. Involved in the binding of tRNA to the ribosomes. The polypeptide is Small ribosomal subunit protein uS10m (RSM10) (Candida glabrata (strain ATCC 2001 / BCRC 20586 / JCM 3761 / NBRC 0622 / NRRL Y-65 / CBS 138) (Yeast)).